A 692-amino-acid chain; its full sequence is Furin-like protease kpc-1 (692 aa).

The signal sequence occupies residues 1–33 (MSNISWYRHCSVRLQLVTLALFLLLGSASLGSA). Residue N3 is glycosylated (N-linked (GlcNAc...) asparagine). The propeptide occupies 34 to 139 (HIDEEFEDDV…QQVAKRRVKR (106 aa)). Over 140–670 (GYRRIRRHTD…RSVQMEATSS (531 aa)) the chain is Lumenal. Positions 152–177 (DIFEEDDDGTQISKSRNRKHPDPNDP) are disordered. D176 provides a ligand contact to Ca(2+). In terms of domain architecture, Peptidase S8 spans 182–503 (MWYLNRGEHH…YGLMDAGAMV (322 aa)). D221 (charge relay system) is an active-site residue. D222 provides a ligand contact to substrate. Residues D230, D242, D247, and D249 each contribute to the Ca(2+) site. The tract at residues 230 to 249 (DISPNYDERASYDVNDRDND) is disordered. 259 to 260 (EN) is a substrate binding site. Residue H262 is the Charge relay system of the active site. Ca(2+) is bound at residue I273. N275 carries an N-linked (GlcNAc...) asparagine glycan. Residues N276, L278, and I280 each contribute to the Ca(2+) site. Intrachain disulfides connect C279/C428 and C371/C401. Substrate contacts are provided by residues E304, 321-326 (SWGPDD), D332, and 360-363 (ASGN). D326 serves as a coordination point for Ca(2+). D369 serves as a coordination point for Ca(2+). 2 residues coordinate substrate: D374 and Y376. Ca(2+) is bound at residue E399. The active-site Charge relay system is the S436. A substrate-binding site is contributed by S436. Residues N455 and N487 are each glycosylated (N-linked (GlcNAc...) asparagine). Positions 512–646 (VDEQHRCRQF…ELVLYGTDRE (135 aa)) constitute a P/Homo B domain. A disulfide bridge links C518 with C544. The Cell attachment site motif lies at 570 to 572 (RGD). A helical transmembrane segment spans residues 671 to 692 (GTQYSIFHVITLVILTFSQILY).

The protein belongs to the peptidase S8 family. Furin subfamily. Interacts (via extracellular domain) with receptor dma-1 (via extracellular domain); the interaction promotes dma-1 internalization. Ca(2+) is required as a cofactor. Expressed in the nervous system including the ventral nerve cord, the nerve ring and the retrovesicular ganglion, and in epithelial cells. Expressed in IL2 neurons. Expressed in PVD mechanosensory neurons. Expressed in pharynx with strong expression in the g2 pharyngeal gland cells and vpi pharyngeal intestinal valve cells. Expressed in intestine.

Its subcellular location is the cell membrane. It is found in the perikaryon. The protein resides in the cell projection. The protein localises to the axon. Furin-like protease which cleaves proproteins at the RX(K/R)R consensus motif. During neuronal development, regulates the formation and extension of dendrite branches and cellular positioning of various type of neurons. Together with chin-1 and cdc-42, plays a role in the development of the neuropil and is required for the guidance of axons from neurons, including SubL pioneer neurons and AIY interneurons, into the nerve ring. Its role in axon guidance in glia and pioneer neurons may be through ensuring the fmi-1 protein is correctly localized to the nerve ring. Promotes the formation, extension and self-avoidance of dendritic branches of PVD and FLP mechanosensory neurons. In PVD neurons, regulates plasma membrane levels of branching receptor dma-1 by targeting it to late endosomes and thus promotes normal dendrite branching and dendrite self-avoidance. Also controls dendrite extension in AIY and D-type motoneurons, dendrite branching in AQR sensory neurons and VC4/5 motoneurons, the normal number of dendritic branches in AVL neurons and the positioning of HSN and ALM/PLM neurons. Dispensable for maintaining dendrite branching in adults. Also regulates dauer-specific dendritic branching of IL2 neurons and dauer-specific nictation behavior. Under adverse environmental conditions, may promote dauer formation by processing insulin-like proteins ins-1 and ins-18, two daf-2/InsR antagonists. The protein is Furin-like protease kpc-1 of Caenorhabditis elegans.